The following is a 244-amino-acid chain: uncharacterized protein (244 aa).

A run of 2 helical transmembrane segments spans residues 29–49 (WIPW…TQHM) and 139–159 (LGMK…ATVI).

The protein belongs to the FMP10 family.

The protein localises to the mitochondrion membrane. This is an uncharacterized protein from Saccharomyces cerevisiae (strain ATCC 204508 / S288c) (Baker's yeast).